The chain runs to 156 residues: ATP synthase subunit b 1 (156 aa).

A helical transmembrane segment spans residues 5–27; it reads FTLISQAMAFAIFIWFTVRFVWP.

The protein belongs to the ATPase B chain family. In terms of assembly, F-type ATPases have 2 components, F(1) - the catalytic core - and F(0) - the membrane proton channel. F(1) has five subunits: alpha(3), beta(3), gamma(1), delta(1), epsilon(1). F(0) has three main subunits: a(1), b(2) and c(10-14). The alpha and beta chains form an alternating ring which encloses part of the gamma chain. F(1) is attached to F(0) by a central stalk formed by the gamma and epsilon chains, while a peripheral stalk is formed by the delta and b chains.

The protein resides in the cell inner membrane. F(1)F(0) ATP synthase produces ATP from ADP in the presence of a proton or sodium gradient. F-type ATPases consist of two structural domains, F(1) containing the extramembraneous catalytic core and F(0) containing the membrane proton channel, linked together by a central stalk and a peripheral stalk. During catalysis, ATP synthesis in the catalytic domain of F(1) is coupled via a rotary mechanism of the central stalk subunits to proton translocation. In terms of biological role, component of the F(0) channel, it forms part of the peripheral stalk, linking F(1) to F(0). In Nitrosospira multiformis (strain ATCC 25196 / NCIMB 11849 / C 71), this protein is ATP synthase subunit b 1.